A 416-amino-acid chain; its full sequence is Actin-like protein 9 (416 aa).

The segment at 1–40 (MDASRPKSSESQSSLEAPRPGPNPSPNVVNKPLQRDSPGM) is disordered.

It belongs to the actin family. As to quaternary structure, interacts with ACTL7A. As to expression, testis-specific.

It is found in the cytoplasmic vesicle. It localises to the secretory vesicle. The protein resides in the acrosome. Its subcellular location is the cytoplasm. The protein localises to the cytoskeleton. It is found in the perinuclear theca. In terms of biological role, testis-specic protein that plays an important role in fusion of proacrosomal vesicles and perinuclear theca formation. The polypeptide is Actin-like protein 9 (Homo sapiens (Human)).